A 763-amino-acid chain; its full sequence is Protein CHROMATIN REMODELING 19 (763 aa).

2 disordered regions span residues 1 to 43 (MKRD…TPSI) and 114 to 149 (EDEE…RGED). Over residues 23–34 (VLKRPRTPKKTR) the composition is skewed to basic residues. The span at 114–135 (EDEEASDDDDDEAESSASEDEF) shows a compositional bias: acidic residues. One can recognise a Helicase ATP-binding domain in the interval 226-404 (LLYKKGIEGA…WSLLEFMLPD (179 aa)). 239–246 (DEMGLGKT) contributes to the ATP binding site. Positions 353 to 356 (DEAH) match the DEAH box motif. A coiled-coil region spans residues 462–482 (RKQEDAYKEAIEEYRAASQAR). The Nuclear localization signal signature appears at 520-527 (IRRIYSDE). The Helicase C-terminal domain occupies 592 to 742 (TLAELLPSMK…AAVLESGVHV (151 aa)).

Belongs to the SNF2/RAD54 helicase family. As to quaternary structure, interacts with SUVR2 and itself.

Its subcellular location is the nucleus. Functionally, DNA helicase that possesses intrinsic ATP-dependent nucleosome-remodeling activity and is both required for DNA repair and heterochromatin organization. Promotes DNA end resection of double-strand breaks (DSBs) following DNA damage: probably acts by weakening histone DNA interactions in nucleosomes flanking DSBs. Probable chromatin remodeling factor. Probable helicase-like transcription factor involved in transcriptional gene silencing. Associates with SUVR2 and contributes to transcriptional gene silencing at RNA-directed DNA methylation (RdDM) target loci but also at RdDM-independent target loci. May be involved in nucleosome positioning to form ordered nucleosome arrays on chromatin. This chain is Protein CHROMATIN REMODELING 19, found in Arabidopsis thaliana (Mouse-ear cress).